Here is a 397-residue protein sequence, read N- to C-terminus: Chorismate synthase (397 aa).

Positions 40 and 46 each coordinate NADP(+). FMN contacts are provided by residues 129–131 (RSS), 257–258 (QA), G302, 317–321 (KPISS), and R343.

Belongs to the chorismate synthase family. As to quaternary structure, homotetramer. It depends on FMNH2 as a cofactor.

It carries out the reaction 5-O-(1-carboxyvinyl)-3-phosphoshikimate = chorismate + phosphate. It functions in the pathway metabolic intermediate biosynthesis; chorismate biosynthesis; chorismate from D-erythrose 4-phosphate and phosphoenolpyruvate: step 7/7. Catalyzes the anti-1,4-elimination of the C-3 phosphate and the C-6 proR hydrogen from 5-enolpyruvylshikimate-3-phosphate (EPSP) to yield chorismate, which is the branch point compound that serves as the starting substrate for the three terminal pathways of aromatic amino acid biosynthesis. This reaction introduces a second double bond into the aromatic ring system. The chain is Chorismate synthase from Chlorobium phaeobacteroides (strain DSM 266 / SMG 266 / 2430).